Consider the following 252-residue polypeptide: 2-succinyl-6-hydroxy-2,4-cyclohexadiene-1-carboxylate synthase (252 aa).

Belongs to the AB hydrolase superfamily. MenH family. In terms of assembly, monomer.

It carries out the reaction 5-enolpyruvoyl-6-hydroxy-2-succinyl-cyclohex-3-ene-1-carboxylate = (1R,6R)-6-hydroxy-2-succinyl-cyclohexa-2,4-diene-1-carboxylate + pyruvate. Its pathway is quinol/quinone metabolism; 1,4-dihydroxy-2-naphthoate biosynthesis; 1,4-dihydroxy-2-naphthoate from chorismate: step 3/7. It functions in the pathway quinol/quinone metabolism; menaquinone biosynthesis. In terms of biological role, catalyzes a proton abstraction reaction that results in 2,5-elimination of pyruvate from 2-succinyl-5-enolpyruvyl-6-hydroxy-3-cyclohexene-1-carboxylate (SEPHCHC) and the formation of 2-succinyl-6-hydroxy-2,4-cyclohexadiene-1-carboxylate (SHCHC). The polypeptide is 2-succinyl-6-hydroxy-2,4-cyclohexadiene-1-carboxylate synthase (Shigella boydii serotype 4 (strain Sb227)).